Consider the following 200-residue polypeptide: Adenylate kinase (200 aa).

10–15 contacts ATP; sequence GAGKGT. The tract at residues 30–59 is NMP; it reads STGDMLRAAVAAETPVGLEAKAIMESGGLV. Residues Thr31, Arg36, 57-59, 85-88, and Gln92 contribute to the AMP site; these read GLV and GFPR. Residues 126–142 are LID; that stretch reads KRAEETAARGQPVRKDD. Arg127 serves as a coordination point for ATP. Residues Arg139 and Arg150 each contribute to the AMP site. ATP is bound at residue Lys178.

The protein belongs to the adenylate kinase family. As to quaternary structure, monomer.

It is found in the cytoplasm. The catalysed reaction is AMP + ATP = 2 ADP. It functions in the pathway purine metabolism; AMP biosynthesis via salvage pathway; AMP from ADP: step 1/1. Functionally, catalyzes the reversible transfer of the terminal phosphate group between ATP and AMP. Plays an important role in cellular energy homeostasis and in adenine nucleotide metabolism. The sequence is that of Adenylate kinase from Methylorubrum extorquens (strain PA1) (Methylobacterium extorquens).